Reading from the N-terminus, the 179-residue chain is Large ribosomal subunit protein bL19 (179 aa).

The protein belongs to the bacterial ribosomal protein bL19 family.

In terms of biological role, this protein is located at the 30S-50S ribosomal subunit interface and may play a role in the structure and function of the aminoacyl-tRNA binding site. This Rhizobium johnstonii (strain DSM 114642 / LMG 32736 / 3841) (Rhizobium leguminosarum bv. viciae) protein is Large ribosomal subunit protein bL19.